A 435-amino-acid chain; its full sequence is Diaminobutyrate--2-oxoglutarate transaminase (435 aa).

K266 is modified (N6-(pyridoxal phosphate)lysine).

Belongs to the class-III pyridoxal-phosphate-dependent aminotransferase family. Pyridoxal 5'-phosphate serves as cofactor.

The enzyme catalyses L-2,4-diaminobutanoate + 2-oxoglutarate = L-aspartate 4-semialdehyde + L-glutamate. Its pathway is amine and polyamine biosynthesis; ectoine biosynthesis; L-ectoine from L-aspartate 4-semialdehyde: step 1/3. Catalyzes reversively the conversion of L-aspartate beta-semialdehyde (ASA) to L-2,4-diaminobutyrate (DABA) by transamination with L-glutamate. The polypeptide is Diaminobutyrate--2-oxoglutarate transaminase (ectB) (Bordetella bronchiseptica (strain ATCC BAA-588 / NCTC 13252 / RB50) (Alcaligenes bronchisepticus)).